A 158-amino-acid polypeptide reads, in one-letter code: Transcription elongation factor GreA (158 aa).

The protein belongs to the GreA/GreB family.

Necessary for efficient RNA polymerase transcription elongation past template-encoded arresting sites. The arresting sites in DNA have the property of trapping a certain fraction of elongating RNA polymerases that pass through, resulting in locked ternary complexes. Cleavage of the nascent transcript by cleavage factors such as GreA or GreB allows the resumption of elongation from the new 3'terminus. GreA releases sequences of 2 to 3 nucleotides. The protein is Transcription elongation factor GreA of Agrobacterium fabrum (strain C58 / ATCC 33970) (Agrobacterium tumefaciens (strain C58)).